The primary structure comprises 387 residues: Exodeoxyribonuclease 7 large subunit (387 aa).

It belongs to the XseA family. As to quaternary structure, heterooligomer composed of large and small subunits.

It localises to the cytoplasm. The enzyme catalyses Exonucleolytic cleavage in either 5'- to 3'- or 3'- to 5'-direction to yield nucleoside 5'-phosphates.. Functionally, bidirectionally degrades single-stranded DNA into large acid-insoluble oligonucleotides, which are then degraded further into small acid-soluble oligonucleotides. In Synechococcus sp. (strain CC9605), this protein is Exodeoxyribonuclease 7 large subunit.